Reading from the N-terminus, the 206-residue chain is Ribosomal RNA small subunit methyltransferase G (206 aa).

Residues glycine 71, phenylalanine 76, 125–126 (IE), and arginine 139 each bind S-adenosyl-L-methionine.

Belongs to the methyltransferase superfamily. RNA methyltransferase RsmG family.

The protein localises to the cytoplasm. The enzyme catalyses guanosine(527) in 16S rRNA + S-adenosyl-L-methionine = N(7)-methylguanosine(527) in 16S rRNA + S-adenosyl-L-homocysteine. Its function is as follows. Specifically methylates the N7 position of guanine in position 527 of 16S rRNA. The sequence is that of Ribosomal RNA small subunit methyltransferase G from Cereibacter sphaeroides (strain ATCC 17023 / DSM 158 / JCM 6121 / CCUG 31486 / LMG 2827 / NBRC 12203 / NCIMB 8253 / ATH 2.4.1.) (Rhodobacter sphaeroides).